The chain runs to 156 residues: Small ribosomal subunit protein uS7 (156 aa).

It belongs to the universal ribosomal protein uS7 family. As to quaternary structure, part of the 30S ribosomal subunit. Contacts proteins S9 and S11.

Functionally, one of the primary rRNA binding proteins, it binds directly to 16S rRNA where it nucleates assembly of the head domain of the 30S subunit. Is located at the subunit interface close to the decoding center, probably blocks exit of the E-site tRNA. This Pelobacter propionicus (strain DSM 2379 / NBRC 103807 / OttBd1) protein is Small ribosomal subunit protein uS7.